The sequence spans 72 residues: AEKLEESSAEAKALSYVHDATTSGHDSYQEGQKCINCLLYTDPSQEEWGGCAVFPGKLVNANGWCTAYVARG.

Residue A1 is modified to N-carbamoylalanine; partial. [4Fe-4S] cluster contacts are provided by C34, C37, C51, and C65.

It belongs to the high-potential iron-sulfur protein (HiPIP) family. In terms of assembly, homodimer.

Specific class of high-redox-potential 4Fe-4S ferredoxins. Functions in anaerobic electron transport in most purple and in some other photosynthetic bacteria and in at least one genus (Paracoccus) of halophilic, denitrifying bacteria. This chain is High-potential iron-sulfur protein isozyme 1, found in Ectothiorhodospira mobilis.